The following is a 209-amino-acid chain: Large ribosomal subunit protein uL3 (209 aa).

Residue Gln150 is modified to N5-methylglutamine.

This sequence belongs to the universal ribosomal protein uL3 family. In terms of assembly, part of the 50S ribosomal subunit. Forms a cluster with proteins L14 and L19. Methylated by PrmB.

Its function is as follows. One of the primary rRNA binding proteins, it binds directly near the 3'-end of the 23S rRNA, where it nucleates assembly of the 50S subunit. The protein is Large ribosomal subunit protein uL3 of Cronobacter sakazakii (strain ATCC BAA-894) (Enterobacter sakazakii).